A 616-amino-acid polypeptide reads, in one-letter code: Homeodomain-interacting protein kinase 4 (616 aa).

Residues 11–347 (YDIIEVLGKG…PSAALRHPFV (337 aa)) enclose the Protein kinase domain. ATP contacts are provided by residues 17 to 25 (LGKGTFGEV) and Lys-40. Catalysis depends on Asp-136, which acts as the Proton acceptor. The disordered stretch occupies residues 485–616 (RHKARKPPAG…SFLQHVTGHH (132 aa)). A compositionally biased stretch (polar residues) spans 496 to 511 (KSDSNLSNLIRLSQVS). Ser-511 is subject to Phosphoserine.

This sequence belongs to the protein kinase superfamily. CMGC Ser/Thr protein kinase family. HIPK subfamily. Autophosphorylated.

Its subcellular location is the cytoplasm. It carries out the reaction L-seryl-[protein] + ATP = O-phospho-L-seryl-[protein] + ADP + H(+). It catalyses the reaction L-threonyl-[protein] + ATP = O-phospho-L-threonyl-[protein] + ADP + H(+). Functionally, protein kinase that phosphorylates TP53, and thus induces TP53 repression of BIRC5 promoter. May act as a corepressor of transcription factors (Potential). This chain is Homeodomain-interacting protein kinase 4 (HIPK4), found in Macaca fascicularis (Crab-eating macaque).